The primary structure comprises 864 residues: Leucine--tRNA ligase (864 aa).

A 'HIGH' region motif is present at residues 42–52; sequence PYPSGKLHMGH. The 'KMSKS' region motif lies at 624 to 628; it reads KMSKS. Residue K627 participates in ATP binding.

Belongs to the class-I aminoacyl-tRNA synthetase family.

It localises to the cytoplasm. The catalysed reaction is tRNA(Leu) + L-leucine + ATP = L-leucyl-tRNA(Leu) + AMP + diphosphate. The sequence is that of Leucine--tRNA ligase from Burkholderia vietnamiensis (strain G4 / LMG 22486) (Burkholderia cepacia (strain R1808)).